A 79-amino-acid polypeptide reads, in one-letter code: Protein VdcD (79 aa).

In terms of biological role, involved in the non-oxidative decarboxylation and detoxification of phenolic derivatives under both aerobic and anaerobic conditions, however the precise biochemical function of VdcD in metabolism of phenolic acid is unknown. The sequence is that of Protein VdcD from Streptomyces sp. (strain D7).